The sequence spans 108 residues: Putative transmembrane protein ORF108 (108 aa).

3 consecutive transmembrane segments (helical) span residues Phe-11–Ile-31, Ile-33–Phe-53, and Val-69–Ile-89.

The protein resides in the host membrane. This chain is Putative transmembrane protein ORF108, found in Acidianus hospitalis (AFV-1).